The primary structure comprises 48 residues: Lantibiotic salivaricin-A (48 aa).

A propeptide spanning residues methionine 1–glycine 26 is cleaved from the precursor. 2 cross-links (beta-methyllanthionine (Thr-Cys)) span residues threonine 35–cysteine 40 and threonine 37–cysteine 47. The lanthionine (Ser-Cys) cross-link spans serine 43–cysteine 48.

Belongs to the type A lantibiotic family. In terms of processing, maturation of lantibiotics involves the enzymatic conversion of Thr, and Ser into dehydrated AA and the formation of thioether bonds with cysteine. This is followed by membrane translocation and cleavage of the modified precursor.

Functionally, lanthionine-containing peptide antibiotic (lantibiotic) active on Gram-positive bacteria. The bactericidal activity of lantibiotics is based on depolarization of energized bacterial cytoplasmic membranes, initiated by the formation of aqueous transmembrane pores. The protein is Lantibiotic salivaricin-A (salA) of Streptococcus salivarius.